We begin with the raw amino-acid sequence, 375 residues long: 23S rRNA (uracil(747)-C(5))-methyltransferase RlmC (375 aa).

4 residues coordinate [4Fe-4S] cluster: cysteine 3, cysteine 11, cysteine 14, and cysteine 87. 4 residues coordinate S-adenosyl-L-methionine: glutamine 212, phenylalanine 241, glutamate 262, and asparagine 307. Cysteine 334 acts as the Nucleophile in catalysis.

Belongs to the class I-like SAM-binding methyltransferase superfamily. RNA M5U methyltransferase family. RlmC subfamily.

The catalysed reaction is uridine(747) in 23S rRNA + S-adenosyl-L-methionine = 5-methyluridine(747) in 23S rRNA + S-adenosyl-L-homocysteine + H(+). Functionally, catalyzes the formation of 5-methyl-uridine at position 747 (m5U747) in 23S rRNA. In Salmonella typhi, this protein is 23S rRNA (uracil(747)-C(5))-methyltransferase RlmC.